Consider the following 105-residue polypeptide: Urease subunit beta (105 aa).

Belongs to the urease beta subunit family. As to quaternary structure, heterotrimer of UreA (gamma), UreB (beta) and UreC (alpha) subunits. Three heterotrimers associate to form the active enzyme.

It localises to the cytoplasm. The catalysed reaction is urea + 2 H2O + H(+) = hydrogencarbonate + 2 NH4(+). It functions in the pathway nitrogen metabolism; urea degradation; CO(2) and NH(3) from urea (urease route): step 1/1. In Marinobacter nauticus (strain ATCC 700491 / DSM 11845 / VT8) (Marinobacter aquaeolei), this protein is Urease subunit beta.